The chain runs to 274 residues: NH(3)-dependent NAD(+) synthetase (274 aa).

46–53 is an ATP binding site; the sequence is GISGGQDS. Mg(2+) is bound at residue Asp-52. Deamido-NAD(+) is bound at residue Arg-140. Thr-160 contacts ATP. Glu-165 lines the Mg(2+) pocket. Residues Lys-173 and Asp-180 each coordinate deamido-NAD(+). Residues Lys-189 and Thr-211 each coordinate ATP. Residue 260–261 participates in deamido-NAD(+) binding; the sequence is HK.

The protein belongs to the NAD synthetase family. As to quaternary structure, homodimer.

It carries out the reaction deamido-NAD(+) + NH4(+) + ATP = AMP + diphosphate + NAD(+) + H(+). Its pathway is cofactor biosynthesis; NAD(+) biosynthesis; NAD(+) from deamido-NAD(+) (ammonia route): step 1/1. Catalyzes the ATP-dependent amidation of deamido-NAD to form NAD. Uses ammonia as a nitrogen source. This Pectobacterium carotovorum subsp. carotovorum (strain PC1) protein is NH(3)-dependent NAD(+) synthetase.